Here is a 503-residue protein sequence, read N- to C-terminus: MKLDTQQISHLLSRQMYHLAPRKKLLIWGGSLGFVLLLLIVASSHQRIRSTILHRTPISTLPVISQEVITADYHPTLLTGFIPTDSDDSDCADFSPSGVIYSTDKLVLHDSLKDIRDSLLKTQYKDLVTLEDEEKMNIDDILKRWYTLSGSSVWIPGMKAHLVVSRVMYLGTNGRSDPLVSFVRVQLFDPDFNELKDIALKFSDKPDGTVIFPYILPVDIPREGSRWLGPEDAKIAVNPETPDDPIVIFNMQNSVNRAMYGFYPFRPENKQVLFSIKDEEPRKKEKNWTPFFVPGSPTTVNFVYDLQKLTILKCSIITGICEKEFVSGDDGQNHGIGIFRGGSNLVPFPTSFTDKDVWVGFPKTHMESCGCSSHIYRPYLMVLVRKGDFYYKAFVSTPLDFGIDVRSWESAESTSCQTAKNVLAVNSISNWDLLDDGLDKDYMTITLSEADVVNSVLRVRGIAKFVDNLTMDDGSTTLSTSNKIDECATTGSKQYCQRYGELH.

Topologically, residues 1–24 (MKLDTQQISHLLSRQMYHLAPRKK) are cytoplasmic. The helical transmembrane segment at 25 to 45 (LLIWGGSLGFVLLLLIVASSH) threads the bilayer. Over 46 to 503 (QRIRSTILHR…QYCQRYGELH (458 aa)) the chain is Extracellular. Asparagine 468 carries an N-linked (GlcNAc...) asparagine glycan.

This sequence belongs to the BMT family.

It localises to the membrane. Its function is as follows. Beta-mannosyltransferase involved in cell wall biosynthesis. Responsible for addition of a hexose to the beta-mannose chain. In Komagataella phaffii (strain ATCC 76273 / CBS 7435 / CECT 11047 / NRRL Y-11430 / Wegner 21-1) (Yeast), this protein is Beta-mannosyltransferase 4 (BMT4).